The primary structure comprises 2122 residues: Unique GC organizer UGO (2122 aa).

5 consecutive transmembrane segments (helical) span residues 19–39, 50–70, 82–102, 115–135, and 145–165; these read FAVA…TNSL, LFGM…FVIV, TYIM…MQLI, VLTF…VLIG, and VVCS…DVGL. Disordered regions lie at residues 337–403, 422–532, 565–591, 627–762, 785–815, 848–870, 903–949, 999–1046, 1068–1308, 1328–1368, 1515–1540, 1560–1608, and 1639–1727; these read AALH…HRSA, FRGL…GPFV, DLRE…SGLQ, HRRG…GRAN, HAAS…CSAS, MSRR…RAER, SKEG…ASAN, RNET…LHSR, PSDL…HEAV, AGLS…SEEE, ANSS…AASA, AAEH…TPHT, and QGLG…TFFG. Over residues 363–374 the composition is skewed to polar residues; it reads RSNTLRGCSGQV. Basic and acidic residues-rich tracts occupy residues 503-525, 565-585, and 632-645; these read LRMD…DPAK, DLRE…HAAA, and GARD…RGEP. Over residues 672-687 the composition is skewed to basic residues; sequence RLSRSRRHKTRTYRRG. A compositionally biased stretch (low complexity) spans 690 to 699; the sequence is SDGTTAGTSD. A compositionally biased stretch (acidic residues) spans 707–720; that stretch reads LEDEGSDSGQESES. Residues 725–735 show a composition bias toward basic residues; the sequence is RRRMRSSRNRR. The segment covering 741-750 has biased composition (low complexity); that stretch reads EDSSSGTSVR. Over residues 751-760 the composition is skewed to basic and acidic residues; sequence SEGRHCREGR. Asn-762 carries an N-linked (GlcNAc...) asparagine glycan. The segment covering 848–860 has biased composition (basic residues); that stretch reads MSRRRRREGKSRP. 2 stretches are compositionally biased toward polar residues: residues 999 to 1011 and 1072 to 1097; these read RNET…SPAT and SLFT…SARI. The N-linked (GlcNAc...) asparagine glycan is linked to Asn-1000. A glycan (N-linked (GlcNAc...) asparagine) is linked at Asn-1165. Residues 1220–1261 are compositionally biased toward basic and acidic residues; that stretch reads SREDLVGEADSHVSPEKEVFVSSRREKREEQVPRSRREERRD. Residues 1262 to 1276 are compositionally biased toward basic residues; sequence RRGRRWRRGRRRRKA. 2 stretches are compositionally biased toward basic and acidic residues: residues 1277 to 1289 and 1345 to 1359; these read RECS…RDSS and GDMR…HSDG. Positions 1515-1527 are enriched in polar residues; the sequence is ANSSTAVSSSLPD. A glycan (N-linked (GlcNAc...) asparagine) is linked at Asn-1516. Low complexity-rich tracts occupy residues 1528-1540 and 1597-1608; these read STAW…AASA and TQTPQTPQTPHT. A compositionally biased stretch (polar residues) spans 1684-1693; it reads LSATPSTRLQ. Helical transmembrane passes span 1859–1879, 1956–1976, 1989–2009, 2017–2037, and 2040–2060; these read VAWL…LLRL, MLAL…WHLI, IIPA…ILAV, IFLL…PPGV, and VQLF…GQLF. A disordered region spans residues 2102–2122; the sequence is DEGSEDEVSMGSGHLVGDRSA.

As to quaternary structure, interacts with guanylate cyclase GC; the interaction regulates guanylate cyclase GC trafficking and catalytic activity.

The protein resides in the cell membrane. Functionally, in tachyzoites, required for the cellular trafficking of guanylate cyclase GC to the cell membrane and for GC guanylate cyclase activity. The chain is Unique GC organizer UGO from Toxoplasma gondii (strain ATCC 50853 / GT1).